The sequence spans 339 residues: Ribosome biogenesis protein BRX1 homolog (339 aa).

The segment at 1–34 (MSAYKRKRGSLPEVATNTKKAKKQLAGSEQEATA) is disordered. The region spanning 53–242 (ERVLIFSSRG…LIKIFKGSFG (190 aa)) is the Brix domain. The interval 304 to 339 (AEEKPQVIETEPPAPKPKMKRKDKQFKRQRMAKKRM) is disordered. Residues 320 to 339 (PKMKRKDKQFKRQRMAKKRM) show a composition bias toward basic residues.

It belongs to the BRX1 family. Ubiquitous.

The protein resides in the nucleus. The protein localises to the nucleolus. Required for biogenesis of the 60S ribosomal subunit. The chain is Ribosome biogenesis protein BRX1 homolog (brix1) from Xenopus laevis (African clawed frog).